Consider the following 828-residue polypeptide: Leucine--tRNA ligase (828 aa).

The short motif at 36 to 46 is the 'HIGH' region element; sequence PYPSGKIHIGH. Residues 595–599 carry the 'KMSKS' region motif; sequence KMSKS. Position 598 (Lys598) interacts with ATP.

Belongs to the class-I aminoacyl-tRNA synthetase family.

The protein resides in the cytoplasm. It catalyses the reaction tRNA(Leu) + L-leucine + ATP = L-leucyl-tRNA(Leu) + AMP + diphosphate. This Rickettsia prowazekii (strain Madrid E) protein is Leucine--tRNA ligase.